Consider the following 218-residue polypeptide: Small ribosomal subunit protein uS3c (218 aa).

A KH type-2 domain is found at 39-120 (IRNFMNKELL…IITCKVVGVT (82 aa)).

It belongs to the universal ribosomal protein uS3 family. As to quaternary structure, part of the 30S ribosomal subunit.

It is found in the plastid. It localises to the chloroplast. The protein is Small ribosomal subunit protein uS3c (rps3) of Euglena gracilis.